We begin with the raw amino-acid sequence, 273 residues long: MLKPALEPRGGFSFENCQRNASLERVLPGLKVPHARKTGTTIAGLVFQDGVILGADTRATNDSVVADKSCEKIHFIAPKIYCCGAGVAADAEMTTRMVASKMELHALSTGREPRVATVTRILRQTLFRYQGHVGASLIVGGVDLTGPQLYGVHPHGSYSRLPFTALGSGQDAALAVLEDRFQPNMTLEAAQGLLVEAVTAGILGDLGSGGNVDACVITKTGAKLLRTLSSPTEPVKRSGRYHFVPGTTAVLTQTVKPLTLELVEETVQAMEVE.

Met1 is subject to N-acetylmethionine. The propeptide at 1 to 39 (MLKPALEPRGGFSFENCQRNASLERVLPGLKVPHARKTG) is removed in mature form. Thr40 functions as the Nucleophile in the catalytic mechanism. Position 230 is a phosphoserine (Ser230).

The protein belongs to the peptidase T1B family. As to quaternary structure, the 26S proteasome consists of a 20S proteasome core and two 19S regulatory subunits. The 20S proteasome core is composed of 28 subunits that are arranged in four stacked rings, resulting in a barrel-shaped structure. The two end rings are each formed by seven alpha subunits, and the two central rings are each formed by seven beta subunits. The catalytic chamber with the active sites is on the inside of the barrel. Component of the immunoproteasome, where it displaces the equivalent housekeeping subunit PSMB7. Component of the spermatoproteasome, a form of the proteasome specifically found in testis. In terms of assembly, (Microbial infection) Interacts with HIV-1 TAT protein. Post-translationally, autocleaved. The resulting N-terminal Thr residue of the mature subunit is responsible for the nucleophile proteolytic activity.

It is found in the cytoplasm. It localises to the nucleus. The catalysed reaction is Cleavage of peptide bonds with very broad specificity.. The proteasome is a multicatalytic proteinase complex which is characterized by its ability to cleave peptides with Arg, Phe, Tyr, Leu, and Glu adjacent to the leaving group at neutral or slightly basic pH. The proteasome has an ATP-dependent proteolytic activity. This subunit is involved in antigen processing to generate class I binding peptides. In Homo sapiens (Human), this protein is Proteasome subunit beta type-10 (PSMB10).